Consider the following 403-residue polypeptide: Putative gustatory receptor 98b (403 aa).

The Cytoplasmic portion of the chain corresponds to 1–11 (MVAQKSRLLAR). The helical transmembrane segment at 12-32 (AFPYLDIFSVFALTPPPQSFG) threads the bilayer. Residues 33–48 (HTPHRRLRWYLMTGYV) are Extracellular-facing. The chain crosses the membrane as a helical span at residues 49–69 (FYATAILATVFIVSYFNIIAI). The Cytoplasmic segment spans residues 70–83 (DEEVLEYNVSDFTR). A helical transmembrane segment spans residues 84–104 (VMGNIQKSLYSIMAIANHLNM). The Extracellular segment spans residues 105–144 (LINYRRLGGIYKDIADLEMDMDEASQCFGGQRQRFSFRFR). A helical membrane pass occupies residues 145–165 (MALCVGVWMILMVGSMPRLTM). Over 166-191 (TAMGPFVSTLLKILTEFVMIMQQLKS) the chain is Cytoplasmic. The helical transmembrane segment at 192–212 (LEYCVFVLIIYELVLRLRRTL) threads the bilayer. At 213-259 (SQLQEEFQDCEQQDMLQALCVALKRNQLLLGRIWRLEGDVGSYFTPT) the chain is on the extracellular side. Residues 260–280 (MLLLFLYNGLTILHMVNWAYI) traverse the membrane as a helical segment. Over 281–365 (NKFLYDSCCQ…LRFTCGGLFD (85 aa)) the chain is Cytoplasmic. A helical transmembrane segment spans residues 366 to 386 (INLKYFGGLLVTIFGYIIILI). Topologically, residues 387 to 403 (QFKVQAIAANRYKKVVN) are extracellular.

This sequence belongs to the insect chemoreceptor superfamily. Gustatory receptor (GR) family. Gr2a subfamily.

It is found in the cell membrane. Its function is as follows. Probable gustatory receptor which mediates acceptance or avoidance behavior, depending on its substrates. This chain is Putative gustatory receptor 98b (Gr98b), found in Drosophila melanogaster (Fruit fly).